The sequence spans 450 residues: Tubulin alpha-6 chain (450 aa).

Glutamine 11, glutamate 71, glycine 144, threonine 145, threonine 179, asparagine 206, and asparagine 228 together coordinate GTP. Residue glutamate 71 participates in Mg(2+) binding. Glutamate 254 is a catalytic residue. Position 349 is a phosphothreonine (threonine 349). Residues 430–450 (KDYEEVGAEGGDDEDDEGEEY) are disordered. Over residues 431-450 (DYEEVGAEGGDDEDDEGEEY) the composition is skewed to acidic residues.

It belongs to the tubulin family. In terms of assembly, dimer of alpha and beta chains. A typical microtubule is a hollow water-filled tube with an outer diameter of 25 nm and an inner diameter of 15 nM. Alpha-beta heterodimers associate head-to-tail to form protofilaments running lengthwise along the microtubule wall with the beta-tubulin subunit facing the microtubule plus end conferring a structural polarity. Microtubules usually have 13 protofilaments but different protofilament numbers can be found in some organisms and specialized cells. Interacts with TFCB. Mg(2+) is required as a cofactor. Undergoes a tyrosination/detyrosination cycle, the cyclic removal and re-addition of a C-terminal tyrosine residue by the enzymes tubulin tyrosine carboxypeptidase (TTCP) and tubulin tyrosine ligase (TTL), respectively. In terms of processing, acetylation of alpha chains at Lys-40 stabilizes microtubules and affects affinity and processivity of microtubule motors. This modification has a role in multiple cellular functions, ranging from cell motility, cell cycle progression or cell differentiation to intracellular trafficking and signaling.

The protein localises to the cytoplasm. The protein resides in the cytoskeleton. The catalysed reaction is GTP + H2O = GDP + phosphate + H(+). In terms of biological role, tubulin is the major constituent of microtubules, a cylinder consisting of laterally associated linear protofilaments composed of alpha- and beta-tubulin heterodimers. Microtubules grow by the addition of GTP-tubulin dimers to the microtubule end, where a stabilizing cap forms. Below the cap, tubulin dimers are in GDP-bound state, owing to GTPase activity of alpha-tubulin. The polypeptide is Tubulin alpha-6 chain (TUBA6) (Arabidopsis thaliana (Mouse-ear cress)).